Consider the following 96-residue polypeptide: Putative pterin-4-alpha-carbinolamine dehydratase (96 aa).

Belongs to the pterin-4-alpha-carbinolamine dehydratase family.

The catalysed reaction is (4aS,6R)-4a-hydroxy-L-erythro-5,6,7,8-tetrahydrobiopterin = (6R)-L-erythro-6,7-dihydrobiopterin + H2O. This is Putative pterin-4-alpha-carbinolamine dehydratase from Metallosphaera sedula (strain ATCC 51363 / DSM 5348 / JCM 9185 / NBRC 15509 / TH2).